Consider the following 36-residue polypeptide: Insecticidal toxin LaIT1 (36 aa).

Disulfide bonds link Cys-11/Cys-23 and Cys-17/Cys-29.

Expressed by the venom gland.

The protein resides in the secreted. Affects the activity of both ryanodine-sensitive calcium-release channels RyR1 and RyR2 with high potency. At lower concentrations the toxin increases full openings of the RyRs, and at higher concentrations it inhibits full openings and induce openings to subconductance levels and reduces the number of full conductance openings. The different actions may be attributed to the toxins binding at different sites on the RyRs, with binding at a high-affinity site mediating the increase in full openings and the induction of subconductance states evoked upon binding to a lower-affinity site. Shows insect lethality against crickets and common cutworms (only shows paralysis against cockroaches), but no toxicity is observed in mice. The protein is Insecticidal toxin LaIT1 of Liocheles australasiae (Dwarf wood scorpion).